Consider the following 469-residue polypeptide: Uronate isomerase (469 aa).

The protein belongs to the metallo-dependent hydrolases superfamily. Uronate isomerase family.

The enzyme catalyses D-glucuronate = D-fructuronate. It catalyses the reaction aldehydo-D-galacturonate = keto-D-tagaturonate. The protein operates within carbohydrate metabolism; pentose and glucuronate interconversion. The chain is Uronate isomerase from Edwardsiella ictaluri (strain 93-146).